We begin with the raw amino-acid sequence, 143 residues long: Large ribosomal subunit protein bL17 (143 aa).

Belongs to the bacterial ribosomal protein bL17 family. In terms of assembly, part of the 50S ribosomal subunit. Contacts protein L32.

In Chelativorans sp. (strain BNC1), this protein is Large ribosomal subunit protein bL17.